The sequence spans 525 residues: GMP synthase [glutamine-hydrolyzing] (525 aa).

One can recognise a Glutamine amidotransferase type-1 domain in the interval 9–207 (RILILDFGSQ…VLGICGCEAL (199 aa)). Cys-86 functions as the Nucleophile in the catalytic mechanism. Residues His-181 and Glu-183 contribute to the active site. Residues 208–400 (WTSATIIEDA…LGLPYDMLYR (193 aa)) enclose the GMPS ATP-PPase domain. ATP is bound at residue 235–241 (SGGVDSS).

Homodimer.

The enzyme catalyses XMP + L-glutamine + ATP + H2O = GMP + L-glutamate + AMP + diphosphate + 2 H(+). The protein operates within purine metabolism; GMP biosynthesis; GMP from XMP (L-Gln route): step 1/1. Catalyzes the synthesis of GMP from XMP. This chain is GMP synthase [glutamine-hydrolyzing], found in Yersinia pestis bv. Antiqua (strain Antiqua).